A 159-amino-acid polypeptide reads, in one-letter code: Phosphopantetheine adenylyltransferase (159 aa).

Substrate is bound at residue Thr9. ATP is bound by residues 9-10 (TF) and His17. Lys41, Leu73, and Arg87 together coordinate substrate. ATP contacts are provided by residues 88-90 (GLR), Glu98, and 123-129 (YSFISST).

It belongs to the bacterial CoaD family. Homohexamer. It depends on Mg(2+) as a cofactor.

The protein resides in the cytoplasm. It carries out the reaction (R)-4'-phosphopantetheine + ATP + H(+) = 3'-dephospho-CoA + diphosphate. The protein operates within cofactor biosynthesis; coenzyme A biosynthesis; CoA from (R)-pantothenate: step 4/5. Its function is as follows. Reversibly transfers an adenylyl group from ATP to 4'-phosphopantetheine, yielding dephospho-CoA (dPCoA) and pyrophosphate. The protein is Phosphopantetheine adenylyltransferase of Pseudomonas putida (strain GB-1).